Consider the following 481-residue polypeptide: MSGQADIALIGLAVMGQNLILNMDEKGFVVCAYNRTVAKVKEFLANEAKDTKVIGADSLEDMVSKLKSPRKVMLLVKAGSAVDDFIQQLVPLLSAGDVIIDGGNSEYQDTSRRCDELAKLGLLFVGSGVSGGEEGARHGPSLMPGGHEAAWPLIQPIFQAICAKADGEPCCEWVGDGGAGHFVKMVHNGIEYGDMQLICEAYHIMKSLGLSADQMADEFGKWNSAELDSFLIEITRDILKYKDGKGYLLERIRDTAGQKGTGKWTAIAALQYGVPVTLIGEAVFSRCLSALKDERVQASSVLKGPSTKAQVANLTKFLDDIKHALYCAKIVSYAQGFMLMREAARENKWRLNYGGIALMWRGGCIIRSVFLGNIKDAYTSQPELSNLLLDDFFKKAIERGQDSWREVVANAFRWGIPVPALSTALSFYDGYRTAKLPANLLQAQRDYFGAHTYELLGQEGQFHHTNWTGTGGNVSASTYQA.

Residues glycine 11–glycine 16, asparagine 34–threonine 36, valine 76–alanine 78, and asparagine 104 contribute to the NADP(+) site. Substrate contacts are provided by residues asparagine 104 and serine 130–glycine 132. The active-site Proton acceptor is the lysine 184. Histidine 187–asparagine 188 contacts substrate. The active-site Proton donor is the glutamate 191. Residues tyrosine 192, lysine 259, arginine 286, arginine 445, and histidine 451 each coordinate substrate.

The protein belongs to the 6-phosphogluconate dehydrogenase family. As to quaternary structure, homodimer.

It carries out the reaction 6-phospho-D-gluconate + NADP(+) = D-ribulose 5-phosphate + CO2 + NADPH. The protein operates within carbohydrate degradation; pentose phosphate pathway; D-ribulose 5-phosphate from D-glucose 6-phosphate (oxidative stage): step 3/3. Functionally, catalyzes the oxidative decarboxylation of 6-phosphogluconate to ribulose 5-phosphate and CO(2), with concomitant reduction of NADP to NADPH. The protein is 6-phosphogluconate dehydrogenase, decarboxylating (Pgd) of Drosophila melanogaster (Fruit fly).